Reading from the N-terminus, the 577-residue chain is Signal peptide peptidase-like 2B (577 aa).

Residues 1-19 (MAAARLAASLLLLAAQVAC) form the signal peptide. Topologically, residues 20-168 (EFGVLRVVPQ…APSEPVMDYN (149 aa)) are lumenal. One can recognise a PA domain in the interval 49 to 149 (LPHDLNKVSL…RDLQDIFRRF (101 aa)). The N-linked (GlcNAc...) asparagine glycan is linked to Asn-91. A helical membrane pass occupies residues 169–189 (MVIIFIMAVGTVALGGYWAGS). The Cytoplasmic segment spans residues 190 to 216 (HDVKKYMKHKRDDVPEKQEDEAVDVTP). Residues 217–237 (VMICVFVVMCCFMLVLLYYFY) form a helical membrane-spanning segment. The Lumenal segment spans residues 238 to 239 (DR). Residues 240–260 (LVYVIIGIFCLASSTGLYSCL) traverse the membrane as a helical segment. Topologically, residues 261–286 (APCVRKLPFCTCRVPDNNLPYFHKRP) are cytoplasmic. The chain crosses the membrane as a helical span at residues 287–307 (QARMLLLALFCVTVSVVWGVF). Residues 308 to 312 (RNEDQ) are Lumenal-facing. Residues 313–333 (WAWVLQDTLGIAFCLYMLRTI) form a helical membrane-spanning segment. Residues 334-341 (RLPTFKAC) are Cytoplasmic-facing. The helical transmembrane segment at 342 to 362 (TLLLLVLFVYDIFFVFITPYL) threads the bilayer. Asp-352 is an active-site residue. At 363–405 (TKSGNSIMVEVATGPSNSSTHEKLPMVLKVPRLNTSPLSLCDR) the chain is on the lumenal side. The chain crosses the membrane as a helical span at residues 406 to 426 (PFSLLGFGDILVPGLLVAYCH). Asp-414 is a catalytic residue. The Cytoplasmic portion of the chain corresponds to 427–438 (RFDIQVQSSRIY). The helical transmembrane segment at 439–459 (FVACTIAYGLGLLVTFVALVL) threads the bilayer. Residues 460-463 (MRHG) are Lumenal-facing. A helical membrane pass occupies residues 464–484 (QPALLYLVPCTLLTSCTVALW). The PAL motif lies at 465-467 (PAL). Over 485 to 577 (RREMGAFWTG…IPVVTPGTSA (93 aa)) the chain is Cytoplasmic. The tract at residues 502-577 (QTPWAAPQGP…IPVVTPGTSA (76 aa)) is disordered.

It belongs to the peptidase A22B family. As to quaternary structure, monomer. Homodimer. Interacts with ITM2B and TNF. Glycosylated.

The protein resides in the cell membrane. Its subcellular location is the golgi apparatus membrane. It localises to the lysosome membrane. The protein localises to the endosome membrane. It is found in the membrane. In terms of biological role, intramembrane-cleaving aspartic protease (I-CLiP) that cleaves type II membrane signal peptides in the hydrophobic plane of the membrane. Functions in ITM2B and TNF processing. Catalyzes the intramembrane cleavage of the anchored fragment of shed TNF-alpha (TNF), which promotes the release of the intracellular domain (ICD) for signaling to the nucleus. May play a role in the regulation of innate and adaptive immunity. This Rattus norvegicus (Rat) protein is Signal peptide peptidase-like 2B.